Consider the following 729-residue polypeptide: Ubiquitin carboxyl-terminal hydrolase BAP1 (729 aa).

The 232-residue stretch at 4 to 235 (GWLELESDPG…IRFNLMAVVP (232 aa)) folds into the UCH catalytic domain. The Arg-finger motif signature appears at 56–60 (RRSRR). Cys91 acts as the Nucleophile in catalysis. His169 (proton donor) is an active-site residue. Residue Ser292 is modified to Phosphoserine. The tract at residues 301–351 (APAASEGNHTDGAEEAAGSCAQAPSHSPPNKPKLVVKPPGSSLNGVHPNPT) is disordered. The short motif at 363 to 366 (NHNY) is the HBM-like motif element. Ser369 and Ser395 each carry phosphoserine. Disordered regions lie at residues 372-435 (QEEE…SADG) and 464-524 (SIKT…SPVT). The span at 395–409 (SDDEDDYEDDEEDDV) shows a compositional bias: acidic residues. Positions 480-524 (THSQPSPTPSNESTDTASEIGSAFNSPLRSPIRSANPTRPSSPVT) are enriched in polar residues. The residue at position 493 (Thr493) is a Phosphothreonine. Residues Ser521, Ser537, Ser585, and Ser597 each carry the phosphoserine modification. Residues 575-623 (LTEGGKGSSPSIRPIQGSQGSSSPVEKEVVEATDSREKTGMVRPGEPLS) form a disordered region. The span at 582 to 598 (SSPSIRPIQGSQGSSSP) shows a compositional bias: polar residues. The interaction with BRCA1 stretch occupies residues 596–721 (SSPVEKEVVE…QRKPDRRKRS (126 aa)). The span at 599–614 (VEKEVVEATDSREKTG) shows a compositional bias: basic and acidic residues. Residues 636–656 (LKCVEAEIANYEACLKEEVEK) adopt a coiled-coil conformation. Residues 642-686 (EIANYEACLKEEVEKRKKFKIDDQRRTHNYDEFICTFISMLAQEG) form an interaction with YY1 region. Residues 670–698 (NYDEFICTFISMLAQEGMLANLVEQNISV) enclose the ULD domain. Residues 699 to 701 (RRR) form an interaction with nucleosomal DNA forming a DNA clamp with ASXL1 region. Positions 699–722 (RRRQGVSIGRLHKQRKPDRRKRSR) match the Classical bipartite Nuclear localization signal (NLS) motif. The disordered stretch occupies residues 703 to 729 (GVSIGRLHKQRKPDRRKRSRPYKAKRQ). Positions 713-729 (RKPDRRKRSRPYKAKRQ) are positively charged C-terminal extension (CTE). The Non-classical PY-nuclear localization signal (PY-NLS) motif lies at 717 to 724 (RRKRSRPY).

It belongs to the peptidase C12 family. BAP1 subfamily. In terms of assembly, core component of the polycomb repressive deubiquitinase (PR-DUB) complex, at least composed of BAP1, one of ASXL1, ASXL2 or (probably) ASXL3, and one of MBD5 or MBD6. The PR-DUB core associates with a number of accessory proteins, including FOXK1, FOXK2, KDM1B, HCFC1, YY1 and OGT; KDM1B specifically associates with ASXL2 PR-DUB complexes. The BAP1 deubiquitinase activity is not required for PR-DUB assembly. Homodimerizes (via coiled-coil hinge-region between the UCH and ULD domains) to mediate assembly of 2 copies of the BAP1-ASXL heterodimer into a bisymmetric tetramer; dimerization enhances association with nucleosomes. The PR-DUB complex associates with nucleosomes to mediate deubiquitination of 'lys-120' of histone H2AK118ub1 substrates; the association requires the positively charged C-terminal tail of BAP1. Interacts (via ULD domain) with ASXL1 (via DEUBAD domain); the interaction is direct and forms a ubiquitin binding cleft. The interaction with ASXL1 stabilizes BAP1 but is not required for nucleosome binding. Associates (via C-terminus) with nucleosome and chromatosome complexes through direct interaction with DNA and the histone3/4 dimer; this association displaces the histone-2A C-terminal tail, extending and orienting the H2AK118ub1 substrate towards the BAP1 deubiquitinase active site. Also interacts (via arginine finger) directly with the histone H2A-H2B acidic patch; this interaction is not critical for nucleosome-chromatosome association but may play a role in orienting the H2AK118ub1 substrate towards the PR-DUB complex active site. Interacts with BRCA1 (via the RING finger). Interacts (via HBM-like motif) with HCFC1. Interacts (via a C-terminal region overlapping the ULD domain) with YY1; the interaction is direct and requires the interaction with HCFC1. Interacts (when phosphorylated at Thr-493) with FOXK1. Interacts (when phosphorylated at Thr-493) with FOXK2; leading to recruitment of the PR-DUB complex and repression of FOXK2 target genes. Interacts (via non-classical PY-NLS) with TNPO1/transportin-1 (via HEAT repeats 8-12); the interaction is direct, mediates BAP1 nuclear localization and disrupts BAP1 homodimerization. Interacts (via C-terminus) with KPNA1/importin alpha5 and KPNA2/importin alpha1; these interactions can contribute to BAP1 nuclear localization but are less important than the interaction with TNPO1/transportin-1. The interaction with TNPO1/transportin-1 disrupts homodimerization and blocks ubiquitination by UBE2O. Ubiquitinated: monoubiquitinated at multiple sites within its nuclear localization signal (NLS) BY UBE2O, leading to cytoplasmic retention. Able to mediate autodeubiquitination via intramolecular interactions to counteract cytoplasmic retention. Monoubiquitinated on at least 4 sites near or within its PY-NLS. As to expression, highly expressed in testis, placenta and ovary. Expressed in breast. levels in the placenta increase over the course of pregnancy.

It localises to the cytoplasm. Its subcellular location is the nucleus. The protein localises to the chromosome. It carries out the reaction Thiol-dependent hydrolysis of ester, thioester, amide, peptide and isopeptide bonds formed by the C-terminal Gly of ubiquitin (a 76-residue protein attached to proteins as an intracellular targeting signal).. In terms of biological role, deubiquitinating enzyme that plays a key role in chromatin by mediating deubiquitination of histone H2A and HCFC1. Catalytic component of the polycomb repressive deubiquitinase (PR-DUB) complex, a complex that specifically mediates deubiquitination of histone H2A monoubiquitinated at 'Lys-120' (H2AK119ub1). Does not deubiquitinate monoubiquitinated histone H2B. The PR-DUB complex is an epigenetic regulator of gene expression and acts as a transcriptional coactivator, affecting genes involved in development, cell communication, signaling, cell proliferation and cell viability. Antagonizes PRC1 mediated H2AK119ub1 monoubiquitination. As part of the PR-DUB complex, associates with chromatin enriched in histone marks H3K4me1, H3K4me3, and H3K27Ac, but not in H3K27me3. Recruited to specific gene-regulatory regions by YY1. Acts as a regulator of cell growth by mediating deubiquitination of HCFC1 N-terminal and C-terminal chains, with some specificity toward 'Lys-48'-linked polyubiquitin chains compared to 'Lys-63'-linked polyubiquitin chains. Deubiquitination of HCFC1 does not lead to increase stability of HCFC1. Interferes with the BRCA1 and BARD1 heterodimer activity by inhibiting their ability to mediate ubiquitination and autoubiquitination. It however does not mediate deubiquitination of BRCA1 and BARD1. Able to mediate autodeubiquitination via intramolecular interactions to counteract monoubiquitination at the nuclear localization signal (NLS), thereby protecting it from cytoplasmic sequestration. Negatively regulates epithelial-mesenchymal transition (EMT) of trophoblast stem cells during placental development by regulating genes involved in epithelial cell integrity, cell adhesion and cytoskeletal organization. This is Ubiquitin carboxyl-terminal hydrolase BAP1 from Homo sapiens (Human).